The sequence spans 621 residues: Chaperone protein DnaK (621 aa).

Position 202 is a phosphothreonine; by autocatalysis (Thr-202). The tract at residues 596–621 (SQFAQAAKQNEEKKEEDKKDSEESKN) is disordered. Positions 604-621 (QNEEKKEEDKKDSEESKN) are enriched in basic and acidic residues.

This sequence belongs to the heat shock protein 70 family.

Acts as a chaperone. In Malacoplasma penetrans (strain HF-2) (Mycoplasma penetrans), this protein is Chaperone protein DnaK.